We begin with the raw amino-acid sequence, 320 residues long: Ferrochelatase (320 aa).

Residues His-194 and Glu-275 each coordinate Fe cation.

This sequence belongs to the ferrochelatase family. In terms of assembly, monomer.

The protein resides in the cytoplasm. It carries out the reaction heme b + 2 H(+) = protoporphyrin IX + Fe(2+). It participates in porphyrin-containing compound metabolism; protoheme biosynthesis; protoheme from protoporphyrin-IX: step 1/1. In terms of biological role, catalyzes the ferrous insertion into protoporphyrin IX. This is Ferrochelatase from Escherichia coli O81 (strain ED1a).